Reading from the N-terminus, the 152-residue chain is SUZ RNA-binding domain-containing (152 aa).

Residue methionine 1 is modified to N-acetylmethionine. Residues 30-152 are disordered; that stretch reads TQKESRKSKS…DGSQGFKQRR (123 aa). Phosphoserine occurs at positions 37, 39, and 51. The SUZ domain maps to 42-107; the sequence is KVPIVIQDDS…ARKRILGSAS (66 aa). The span at 66 to 81 shows a compositional bias: polar residues; sequence PTSNGVVSSPNSTSRP. Over residues 89–100 the composition is skewed to basic and acidic residues; it reads AQREAEYAEARK. Phosphoserine occurs at positions 105 and 107. The 42-residue stretch at 111–152 folds into the SUZ-C domain; sequence EQEKPILDRPTRISQPEDSRQPNNVIRQPLGPDGSQGFKQRR. The span at 113–130 shows a compositional bias: basic and acidic residues; the sequence is EKPILDRPTRISQPEDSR.

Belongs to the SZRD1 family.

In Homo sapiens (Human), this protein is SUZ RNA-binding domain-containing (SZRD1).